Consider the following 376-residue polypeptide: Lipoyl synthase 1, chloroplastic (376 aa).

Positions 1–13 (MIEQSLSKPSFSL) are enriched in polar residues. 2 disordered regions span residues 1–25 (MIEQSLSKPSFSLSIPIPQPPKSKS) and 47–75 (IDAKHPQISSINSNGGGKMGSYTGRDPNV). A chloroplast-targeting transit peptide spans 1 to 35 (MIEQSLSKPSFSLSIPIPQPPKSKSSFLCSYSKIR). Residues Cys-107, Cys-112, Cys-118, Cys-138, Cys-142, Cys-145, and Ser-353 each contribute to the [4Fe-4S] cluster site. In terms of domain architecture, Radical SAM core spans 121–342 (GGGDGIATAT…KEYGESIGFR (222 aa)).

The protein belongs to the radical SAM superfamily. Lipoyl synthase family. The cofactor is [4Fe-4S] cluster.

It localises to the plastid. It is found in the chloroplast. The enzyme catalyses [[Fe-S] cluster scaffold protein carrying a second [4Fe-4S](2+) cluster] + N(6)-octanoyl-L-lysyl-[protein] + 2 oxidized [2Fe-2S]-[ferredoxin] + 2 S-adenosyl-L-methionine + 4 H(+) = [[Fe-S] cluster scaffold protein] + N(6)-[(R)-dihydrolipoyl]-L-lysyl-[protein] + 4 Fe(3+) + 2 hydrogen sulfide + 2 5'-deoxyadenosine + 2 L-methionine + 2 reduced [2Fe-2S]-[ferredoxin]. Its pathway is protein modification; protein lipoylation via endogenous pathway; protein N(6)-(lipoyl)lysine from octanoyl-[acyl-carrier-protein]: step 2/2. Its function is as follows. Catalyzes the radical-mediated insertion of two sulfur atoms into the C-6 and C-8 positions of the octanoyl moiety bound to the lipoyl domains of lipoate-dependent enzymes, thereby converting the octanoylated domains into lipoylated derivatives. This chain is Lipoyl synthase 1, chloroplastic, found in Populus trichocarpa (Western balsam poplar).